A 296-amino-acid chain; its full sequence is 33 kDa chaperonin (296 aa).

Cystine bridges form between cysteine 237–cysteine 239 and cysteine 270–cysteine 273.

It belongs to the HSP33 family. Post-translationally, under oxidizing conditions two disulfide bonds are formed involving the reactive cysteines. Under reducing conditions zinc is bound to the reactive cysteines and the protein is inactive.

The protein localises to the cytoplasm. Functionally, redox regulated molecular chaperone. Protects both thermally unfolding and oxidatively damaged proteins from irreversible aggregation. Plays an important role in the bacterial defense system toward oxidative stress. This is 33 kDa chaperonin from Acetivibrio thermocellus (strain ATCC 27405 / DSM 1237 / JCM 9322 / NBRC 103400 / NCIMB 10682 / NRRL B-4536 / VPI 7372) (Clostridium thermocellum).